The sequence spans 994 residues: Leucine-rich repeat receptor-like kinase protein FLORAL ORGAN NUMBER1 (994 aa).

Positions methionine 1–alanine 17 are cleaved as a signal peptide. 21 LRR repeats span residues alanine 73–leucine 93, aspartate 94–leucine 117, proline 118–glycine 141, phenylalanine 147–histidine 171, alanine 172–aspartate 194, leucine 195–leucine 219, leucine 244–leucine 268, glutamine 269–leucine 292, serine 293–leucine 316, asparagine 318–phenylalanine 340, alanine 341–asparagine 364, glycine 365–glycine 388, arginine 390–cysteine 412, lysine 413–leucine 436, glutamine 438–glycine 459, aspartate 460–leucine 483, proline 484–leucine 507, asparagine 509–cysteine 531, serine 533–leucine 555, lysine 556–methionine 579, and serine 581–valine 604. N-linked (GlcNAc...) asparagine glycans are attached at residues asparagine 75, asparagine 98, asparagine 124, asparagine 129, and asparagine 159. Residue asparagine 256 is glycosylated (N-linked (GlcNAc...) asparagine). N-linked (GlcNAc...) asparagine glycosylation is present at asparagine 315. The N-linked (GlcNAc...) asparagine glycan is linked to asparagine 352. Asparagine 495, asparagine 509, and asparagine 514 each carry an N-linked (GlcNAc...) asparagine glycan. N-linked (GlcNAc...) asparagine glycans are attached at residues asparagine 562 and asparagine 578. The N-linked (GlcNAc...) asparagine glycan is linked to asparagine 606. A helical transmembrane segment spans residues lysine 647–alanine 667. Residues valine 704–serine 978 form the Protein kinase domain. ATP is bound by residues isoleucine 710–valine 718 and lysine 731. The active-site Proton acceptor is the aspartate 828.

Belongs to the protein kinase superfamily. Ser/Thr protein kinase family. Expressed in shoot apical meristem, and after transition to the reproductive phase, detected in the inflorescence and the floral meristems. Expressed uniformly throughout the meristems. Expressed also in floral organ primordia, such as the palea, lemma, lodicules, stamens, carpels and ovules.

The protein localises to the membrane. The enzyme catalyses L-seryl-[protein] + ATP = O-phospho-L-seryl-[protein] + ADP + H(+). It catalyses the reaction L-threonyl-[protein] + ATP = O-phospho-L-threonyl-[protein] + ADP + H(+). Functionally, receptor-like kinase protein that regulates the size of the floral meristem. This chain is Leucine-rich repeat receptor-like kinase protein FLORAL ORGAN NUMBER1 (FON1), found in Oryza sativa subsp. japonica (Rice).